Consider the following 132-residue polypeptide: MGLIVYYSSATGNTEHFVSQLGQRLFKIDKRKPSAFVGEPYVLVVPTYADGEGRGAVPKAVIHFLNEAENRKLIRGVIGSGNRNFGRYYSLASKIIAEKCGVPCLYRFELRGTDEDVICVKKGLERFWKQLG.

The protein belongs to the NrdI family.

Its function is as follows. Probably involved in ribonucleotide reductase function. This Bartonella tribocorum (strain CIP 105476 / IBS 506) protein is Protein NrdI.